The sequence spans 553 residues: MSDIALTVSVLALVAVVGLWIGNIKVRGVGFGIGGVLFGGIIVGHFVDQAGVTLSGDMLHFIQEFGLILFVYTIGIQVGPGFFASLRVSGLRLNLFAVLIVIMGGLVTAILHKIFAIPLPVVLGIFSGAVTNTPALGAGQQILRDLGTPVDLVDQMGMSYAMAYPFGICGILLTMWLMRLIFRVNVEAEAQKHESSLANGHSLIQTMNIRVENPNLNNMAIQDVPILNSDKIICSRLKRDDTLMVPSPGTIIQAGDLLHLVGQSTDLHNAQLVIGKEVDTSLSTRGTDLRVERVVVTNEKVLGKRIRDLHFKERYDVVISRLNRAGVELVASSDASLQFGDILNLVGRPASIDAVANVVGNAQQKLQQVQMLPVFIGIGLGVLLGSIPLFVPGFPVALKLGLAGGPLIMALILGRIGSIGKLYWFMPPSANLALRELGIVLFLAVVGLKSGGDFVDTLTQGEGLSWIGYGIFITAIPLITIGLLARIFAKMNYLTLCGMLAGSMTDPPALAFANNLHATSGAAALSYATVYPLVMFLRIITPQLLAVIFWGMG.

A run of 5 helical transmembrane segments spans residues 4 to 24 (IALT…IGNI), 28 to 48 (GVGF…HFVD), 65 to 85 (FGLI…FFAS), 95 to 115 (LFAV…HKIF), and 158 to 178 (MSYA…MWLM). RCK C-terminal domains follow at residues 192-276 (KHES…VIGK) and 279-361 (DTSL…VVGN). 6 helical membrane passes run 371–391 (MLPV…PLFV), 393–413 (GFPV…ALIL), 437–457 (LGIV…FVDT), 464–484 (LSWI…IGLL), 493–513 (YLTL…LAFA), and 533–553 (LVMF…WGMG).

It belongs to the AAE transporter (TC 2.A.81) family. YidE subfamily.

It localises to the cell membrane. This is Putative transport protein YidE from Salmonella paratyphi C (strain RKS4594).